A 564-amino-acid polypeptide reads, in one-letter code: Ribulokinase (564 aa).

Belongs to the ribulokinase family.

It carries out the reaction D-ribulose + ATP = D-ribulose 5-phosphate + ADP + H(+). The catalysed reaction is L-ribulose + ATP = L-ribulose 5-phosphate + ADP + H(+). Its pathway is carbohydrate degradation; L-arabinose degradation via L-ribulose; D-xylulose 5-phosphate from L-arabinose (bacterial route): step 2/3. The sequence is that of Ribulokinase from Geobacillus thermodenitrificans (strain NG80-2).